Consider the following 455-residue polypeptide: Zinc finger and BTB domain-containing protein 8A.2 (455 aa).

The BTB domain maps to 24-92 (CDCHIMIDGH…MYSGKLNLSG (69 aa)). C2H2-type zinc fingers lie at residues 299–321 (FKCP…LLCH) and 327–350 (YPCQ…RTIH).

The protein localises to the nucleus. Its function is as follows. May be involved in transcriptional regulation. The chain is Zinc finger and BTB domain-containing protein 8A.2 (zbtb8a.2) from Xenopus tropicalis (Western clawed frog).